A 388-amino-acid chain; its full sequence is Deoxyguanosinetriphosphate triphosphohydrolase-like protein (388 aa).

The segment at Met-1–Arg-32 is disordered. The 137-residue stretch at Arg-69–Asp-205 folds into the HD domain.

The protein belongs to the dGTPase family. Type 2 subfamily.

The sequence is that of Deoxyguanosinetriphosphate triphosphohydrolase-like protein from Bradyrhizobium sp. (strain ORS 278).